The sequence spans 425 residues: Cyanogenic beta-glucosidase (425 aa).

An N-terminal signal peptide occupies residues 1–11; it reads LLSITTTHIHA. Residues Q44, H148, and 193–194 each bind a beta-D-glucoside; that span reads NE. The Proton donor role is filled by E194. A disulfide bridge links C213 with C221. N220 is a glycosylation site (N-linked (GlcNAc...) asparagine). A beta-D-glucoside-binding residues include Y337 and E408. The active-site Nucleophile is the E408. A glycan (N-linked (GlcNAc...) asparagine) is linked at N412.

This sequence belongs to the glycosyl hydrolase 1 family. As to quaternary structure, homodimer. Leaves.

The enzyme catalyses Hydrolysis of terminal, non-reducing beta-D-glucosyl residues with release of beta-D-glucose.. In terms of biological role, hydrolyzes cyanoglucosides, contributing to the release of hydrocyanic acid, which functions as a defense mechanism against small predators, when the leaf tissue is damaged. In Trifolium repens (Creeping white clover), this protein is Cyanogenic beta-glucosidase (LI).